The following is a 152-amino-acid chain: Deoxyuridine 5'-triphosphate nucleotidohydrolase (152 aa).

Substrate is bound by residues 63–65, asparagine 76, and 80–82; these read RSG and TID. Positions 129–152 are disordered; the sequence is LDDTERGQGGYGSTGVSAMPPVDG.

It belongs to the dUTPase family. It depends on Mg(2+) as a cofactor.

The enzyme catalyses dUTP + H2O = dUMP + diphosphate + H(+). Its pathway is pyrimidine metabolism; dUMP biosynthesis; dUMP from dCTP (dUTP route): step 2/2. Its function is as follows. This enzyme is involved in nucleotide metabolism: it produces dUMP, the immediate precursor of thymidine nucleotides and it decreases the intracellular concentration of dUTP so that uracil cannot be incorporated into DNA. The sequence is that of Deoxyuridine 5'-triphosphate nucleotidohydrolase from Cutibacterium acnes (strain DSM 16379 / KPA171202) (Propionibacterium acnes).